A 701-amino-acid polypeptide reads, in one-letter code: L-glutamate oxidase precursor (701 aa).

An N-terminal signal peptide occupies residues 1–14; the sequence is MTTDTARRHTGAER. Residues A69, E88, A89, R97, M123, R124, M354, and S409 each contribute to the FAD site. Positions 481–520 are excised as a propeptide; it reads LALPQSVRNLPTGLLGAHPSVDESRIGEEQVEYYRNSELR. The FAD site is built by E645, W653, and I654. Residues 684-701 constitute a propeptide that is removed on maturation; sequence RRGAAAATEPMREEALTS.

Belongs to the flavin monoamine oxidase family. LGOX subfamily. The LGOX precursor forms homodimers. The mature enzyme is a heterohexamer composed of 2 alpha chains, 2 beta chains and 2 gamma chains (alpha2beta2gamma2). Requires FAD as cofactor. In terms of processing, the precursor form is proteolytically cleaved by an endopeptidase into alpha, beta and gamma chains, which form the stable mature enzyme. Activation by proteolysis occurs after secretion.

It localises to the secreted. It catalyses the reaction L-glutamate + O2 + H2O = H2O2 + 2-oxoglutarate + NH4(+). Produced as a single polypeptide precursor and is activated by proteolytic cleavage. The LGOX precursor is an active enzyme, but it exhibits lower catalytic efficiency and lower thermostability compared with the mature hexameric LGOX. The mature form is strongly inhibited by p-chloromercuribenzoate, but not by CuCl(2), EDTA and diethyldithiocarbamate. In terms of biological role, catalyzes the oxidative deamination of L-glutamate to 2-ketoglutarate along with the production of ammonia and hydrogen peroxide. Shows strict substrate specificity for L-glutamate, and exhibits only very weak activity with L-aspartate. The chain is L-glutamate oxidase precursor from Streptomyces sp.